We begin with the raw amino-acid sequence, 389 residues long: Formate-dependent phosphoribosylglycinamide formyltransferase (389 aa).

N(1)-(5-phospho-beta-D-ribosyl)glycinamide is bound by residues 15-16 (EL) and Glu75. Residues Arg107, Lys148, 153–158 (SSGKGQ), 188–191 (EEFL), and Glu196 each bind ATP. Residues 112–302 (DLAAGELALR…EFELHLRAVL (191 aa)) enclose the ATP-grasp domain. Mg(2+)-binding residues include Glu261 and Glu273. Residues Asp280, Lys350, and 357 to 358 (RR) contribute to the N(1)-(5-phospho-beta-D-ribosyl)glycinamide site.

The protein belongs to the PurK/PurT family. Homodimer.

It catalyses the reaction N(1)-(5-phospho-beta-D-ribosyl)glycinamide + formate + ATP = N(2)-formyl-N(1)-(5-phospho-beta-D-ribosyl)glycinamide + ADP + phosphate + H(+). It participates in purine metabolism; IMP biosynthesis via de novo pathway; N(2)-formyl-N(1)-(5-phospho-D-ribosyl)glycinamide from N(1)-(5-phospho-D-ribosyl)glycinamide (formate route): step 1/1. Its function is as follows. Involved in the de novo purine biosynthesis. Catalyzes the transfer of formate to 5-phospho-ribosyl-glycinamide (GAR), producing 5-phospho-ribosyl-N-formylglycinamide (FGAR). Formate is provided by PurU via hydrolysis of 10-formyl-tetrahydrofolate. In Synechococcus sp. (strain WH7803), this protein is Formate-dependent phosphoribosylglycinamide formyltransferase.